A 383-amino-acid chain; its full sequence is Cobalt-precorrin-5B C(1)-methyltransferase (383 aa).

The tract at residues 1-24 (MQPSARRPFDLATPAPNGLRRGRT) is disordered.

The protein belongs to the CbiD family.

It catalyses the reaction Co-precorrin-5B + S-adenosyl-L-methionine = Co-precorrin-6A + S-adenosyl-L-homocysteine. Its pathway is cofactor biosynthesis; adenosylcobalamin biosynthesis; cob(II)yrinate a,c-diamide from sirohydrochlorin (anaerobic route): step 6/10. In terms of biological role, catalyzes the methylation of C-1 in cobalt-precorrin-5B to form cobalt-precorrin-6A. The chain is Cobalt-precorrin-5B C(1)-methyltransferase from Ralstonia nicotianae (strain ATCC BAA-1114 / GMI1000) (Ralstonia solanacearum).